The sequence spans 148 residues: Macrodomain Ter protein (148 aa).

This sequence belongs to the MatP family. Homodimer.

It localises to the cytoplasm. In terms of biological role, required for spatial organization of the terminus region of the chromosome (Ter macrodomain) during the cell cycle. Prevents early segregation of duplicated Ter macrodomains during cell division. Binds specifically to matS, which is a 13 bp signature motif repeated within the Ter macrodomain. In Haemophilus influenzae (strain 86-028NP), this protein is Macrodomain Ter protein.